The sequence spans 100 residues: Small ribosomal subunit protein uS14m (100 aa).

It belongs to the universal ribosomal protein uS14 family.

It is found in the mitochondrion. The chain is Small ribosomal subunit protein uS14m (RPS14) from Vicia faba (Broad bean).